The primary structure comprises 206 residues: Ribosomal RNA large subunit methyltransferase E (206 aa).

The S-adenosyl-L-methionine site is built by glycine 63, tryptophan 65, aspartate 83, aspartate 99, and aspartate 124. The Proton acceptor role is filled by lysine 164.

The protein belongs to the class I-like SAM-binding methyltransferase superfamily. RNA methyltransferase RlmE family.

It is found in the cytoplasm. The enzyme catalyses uridine(2552) in 23S rRNA + S-adenosyl-L-methionine = 2'-O-methyluridine(2552) in 23S rRNA + S-adenosyl-L-homocysteine + H(+). Specifically methylates the uridine in position 2552 of 23S rRNA at the 2'-O position of the ribose in the fully assembled 50S ribosomal subunit. The chain is Ribosomal RNA large subunit methyltransferase E from Buchnera aphidicola subsp. Schizaphis graminum (strain Sg).